The following is a 468-amino-acid chain: Argininosuccinate lyase (468 aa).

The protein belongs to the lyase 1 family. Argininosuccinate lyase subfamily.

It is found in the cytoplasm. The catalysed reaction is 2-(N(omega)-L-arginino)succinate = fumarate + L-arginine. It functions in the pathway amino-acid biosynthesis; L-arginine biosynthesis; L-arginine from L-ornithine and carbamoyl phosphate: step 3/3. The chain is Argininosuccinate lyase from Hahella chejuensis (strain KCTC 2396).